A 197-amino-acid polypeptide reads, in one-letter code: Thymidylate kinase (197 aa).

An ATP-binding site is contributed by 7–14 (GIDGSGKS).

It belongs to the thymidylate kinase family.

The catalysed reaction is dTMP + ATP = dTDP + ADP. Functionally, phosphorylation of dTMP to form dTDP in both de novo and salvage pathways of dTTP synthesis. This chain is Thymidylate kinase, found in Thermotoga sp. (strain RQ2).